The sequence spans 154 residues: Myoglobin-2 (154 aa).

Positions 2–148 constitute a Globin domain; sequence GLSDGEWQLV…FRKDIATKYK (147 aa). Residue H65 participates in nitrite binding. H65 contacts O2. H94 is a heme b binding site.

It belongs to the globin family. In terms of assembly, monomeric.

Its subcellular location is the cytoplasm. The protein localises to the sarcoplasm. It carries out the reaction Fe(III)-heme b-[protein] + nitric oxide + H2O = Fe(II)-heme b-[protein] + nitrite + 2 H(+). The catalysed reaction is H2O2 + AH2 = A + 2 H2O. Its function is as follows. Monomeric heme protein which primary function is to store oxygen and facilitate its diffusion within muscle tissues. Reversibly binds oxygen through a pentacoordinated heme iron and enables its timely and efficient release as needed during periods of heightened demand. Depending on the oxidative conditions of tissues and cells, and in addition to its ability to bind oxygen, it also has a nitrite reductase activity whereby it regulates the production of bioactive nitric oxide. Under stress conditions, like hypoxia and anoxia, it also protects cells against reactive oxygen species thanks to its pseudoperoxidase activity. This Stenella attenuata (Pantropical spotted dolphin) protein is Myoglobin-2 (MB2).